The sequence spans 151 residues: S-protein homolog 27 (151 aa).

N91 and N123 each carry an N-linked (GlcNAc...) asparagine glycan.

It belongs to the plant self-incompatibility (S1) protein family.

Its subcellular location is the secreted. In Arabidopsis thaliana (Mouse-ear cress), this protein is S-protein homolog 27.